A 647-amino-acid chain; its full sequence is Homologous recombination OB-fold protein (647 aa).

Ser-47 carries the phosphoserine modification. Disordered stretches follow at residues 284–361 (ARGT…GPQG), 380–399 (SRTP…RRFP), and 581–631 (SFLK…DDLD). 4 positions are modified to asymmetric dimethylarginine: Arg-285, Arg-295, Arg-329, and Arg-337. Positions 287–308 (TIQSSPQNRFPCQPFQSPSSWL) are enriched in polar residues. A compositionally biased stretch (low complexity) spans 319 to 332 (TPNSSCSTPSRTSS). Residues 380–390 (SRTPQQPTHPS) are compositionally biased toward polar residues. Residues 618–631 (ASPEEELPEADDLD) show a composition bias toward acidic residues.

As to quaternary structure, interacts with MCM8; this interaction is necessary for MCM8-MCM9 helicase complex recruitment to DNA damage sites. Interacts with RPA1; this interaction associates HROB with the RPA complex.

The protein localises to the nucleus. It localises to the chromosome. DNA-binding protein involved in homologous recombination that acts by recruiting the MCM8-MCM9 helicase complex to sites of DNA damage to promote DNA repair synthesis. This chain is Homologous recombination OB-fold protein, found in Homo sapiens (Human).